A 734-amino-acid polypeptide reads, in one-letter code: Tripartite terminase subunit 3 (734 aa).

The short motif at 184-190 (ASKRARV) is the Nuclear localization signal element. Positions 259-266 (VPRRHGKT) match the Walker A motif motif. Residues 353-358 (LLFVDE) carry the Walker B motif motif. Glu358 serves as the catalytic For ATPase activity. Active-site for nuclease activity residues include Asp511, Glu583, and Asp707.

Belongs to the herpesviridae TRM3 protein family. In terms of assembly, interacts with the terminase subunits TRM1 and TRM2. Interacts with portal protein.

The protein resides in the host nucleus. Its function is as follows. Component of the molecular motor that translocates viral genomic DNA in empty capsid during DNA packaging. Forms a tripartite terminase complex together with TRM1 and TRM2 in the host cytoplasm. Once the complex reaches the host nucleus, it interacts with the capsid portal vertex. This portal forms a ring in which genomic DNA is translocated into the capsid. TRM3 carries an RNase H-like nuclease activity that plays an important role for the cleavage of concatemeric viral DNA into unit length genomes. The chain is Tripartite terminase subunit 3 from Equus caballus (Horse).